Reading from the N-terminus, the 469-residue chain is Probable periplasmic serine endoprotease DegP-like (469 aa).

The signal sequence occupies residues 1–25; sequence MNRLLKQVCMVVVSSFMMASMLTHA. Catalysis depends on charge relay system residues H114, D144, and S217. Substrate contacts are provided by residues 215–217 and 272–276; these read GNS and LGVLI. PDZ domains lie at 261-352 and 358-458; these read LKSD…YRDG and SVTL…IRQG.

This sequence belongs to the peptidase S1C family.

The protein localises to the periplasm. The enzyme catalyses Acts on substrates that are at least partially unfolded. The cleavage site P1 residue is normally between a pair of hydrophobic residues, such as Val-|-Val.. In terms of biological role, might be efficient in the degradation of transiently denatured and unfolded proteins which accumulate in the periplasm following stress conditions. The chain is Probable periplasmic serine endoprotease DegP-like from Marinomonas sp. (strain MWYL1).